The chain runs to 394 residues: MANEKFIRNKTHLNVGTIGHVDHGKTTLTAAITQVLSARGLAKSRAYDQIDNAPEERERGITIKTSHVEYETEKRHYAHVDCPGHADYVKNMITGAAQMDAAILVVSGADSVMPQTREHILLARQVGVPKIVVFLNKCDLSPDEQILELVEMEVRELLSQYDFPGDDIPVIRGSALKALEGDAHYVAQVNKLIETLDTYIEDPVREVDKPFLMPVEDVFTITGRGTVVTGRVERGQVKAGDEVEIVGLKETRKTIVTAVEMFKKDLEFAQAGDNVGALLRGINREDVQRGQVLAKPGSVKPHSKFIAQVYVLTKEEGGRHTAFFSQYRPQFYFRTTDITGVVELQGDVKMVMPGDNAELVVTLNNPIAIEEGTKFSIREGGKTVGAGSVSKLLN.

The tr-type G domain maps to 10 to 204 (KTHLNVGTIG…TLDTYIEDPV (195 aa)). Residues 19 to 26 (GHVDHGKT) form a G1 region. 19–26 (GHVDHGKT) serves as a coordination point for GTP. A Mg(2+)-binding site is contributed by T26. The interval 60-64 (GITIK) is G2. A G3 region spans residues 81-84 (DCPG). Residues 81 to 85 (DCPGH) and 136 to 139 (NKCD) each bind GTP. The G4 stretch occupies residues 136–139 (NKCD). The segment at 174–176 (SAL) is G5.

Belongs to the TRAFAC class translation factor GTPase superfamily. Classic translation factor GTPase family. EF-Tu/EF-1A subfamily. In terms of assembly, monomer.

The protein resides in the cytoplasm. It catalyses the reaction GTP + H2O = GDP + phosphate + H(+). Functionally, GTP hydrolase that promotes the GTP-dependent binding of aminoacyl-tRNA to the A-site of ribosomes during protein biosynthesis. This chain is Elongation factor Tu, found in Aster yellows witches'-broom phytoplasma (strain AYWB).